The chain runs to 349 residues: Isopentenyl-diphosphate delta-isomerase (349 aa).

Residue 6 to 7 (RK) coordinates substrate. FMN-binding positions include 62–64 (AMT), S93, and N122. Residue Q152 participates in substrate binding. E153 serves as a coordination point for Mg(2+). Residues K184, T214, 258-259 (GG), and 280-281 (AG) each bind FMN.

This sequence belongs to the IPP isomerase type 2 family. In terms of assembly, homooctamer. Dimer of tetramers. FMN is required as a cofactor. The cofactor is NADPH. Mg(2+) serves as cofactor.

The protein resides in the cytoplasm. The enzyme catalyses isopentenyl diphosphate = dimethylallyl diphosphate. In terms of biological role, involved in the biosynthesis of isoprenoids. Catalyzes the 1,3-allylic rearrangement of the homoallylic substrate isopentenyl (IPP) to its allylic isomer, dimethylallyl diphosphate (DMAPP). The chain is Isopentenyl-diphosphate delta-isomerase from Bacillus mycoides (strain KBAB4) (Bacillus weihenstephanensis).